The sequence spans 392 residues: Formate-dependent phosphoribosylglycinamide formyltransferase (392 aa).

N(1)-(5-phospho-beta-D-ribosyl)glycinamide-binding positions include 12–13 and glutamate 72; that span reads EL. Residues arginine 104, lysine 145, 150–155, 185–188, and glutamate 193 contribute to the ATP site; these read SSGKGQ and EAFV. Residues 109-300 enclose the ATP-grasp domain; it reads DLAARDLGLR…EFELHARAVL (192 aa). Positions 258 and 270 each coordinate Mg(2+). N(1)-(5-phospho-beta-D-ribosyl)glycinamide is bound by residues aspartate 277, lysine 348, and 355-356; that span reads RR.

It belongs to the PurK/PurT family. Homodimer.

It carries out the reaction N(1)-(5-phospho-beta-D-ribosyl)glycinamide + formate + ATP = N(2)-formyl-N(1)-(5-phospho-beta-D-ribosyl)glycinamide + ADP + phosphate + H(+). It functions in the pathway purine metabolism; IMP biosynthesis via de novo pathway; N(2)-formyl-N(1)-(5-phospho-D-ribosyl)glycinamide from N(1)-(5-phospho-D-ribosyl)glycinamide (formate route): step 1/1. Its function is as follows. Involved in the de novo purine biosynthesis. Catalyzes the transfer of formate to 5-phospho-ribosyl-glycinamide (GAR), producing 5-phospho-ribosyl-N-formylglycinamide (FGAR). Formate is provided by PurU via hydrolysis of 10-formyl-tetrahydrofolate. In Chlorobaculum tepidum (strain ATCC 49652 / DSM 12025 / NBRC 103806 / TLS) (Chlorobium tepidum), this protein is Formate-dependent phosphoribosylglycinamide formyltransferase.